Reading from the N-terminus, the 1080-residue chain is Serine/threonine-protein kinase KIC1 (1080 aa).

A Protein kinase domain is found at 23–276 (FKRTEVIGRG…ADDLLKSKFI (254 aa)). ATP-binding positions include 29-37 (IGRGKFGVV) and lysine 52. Aspartate 144 serves as the catalytic Proton acceptor. 4 disordered regions span residues 308–347 (EGSI…EIKR), 615–760 (KARS…LAPP), 787–831 (STLN…LQMP), and 901–956 (SQSI…NTGN). A compositionally biased stretch (low complexity) spans 312-326 (PENEPSKPSEAPKPS). Over residues 615–626 (KARSSTVTAGTP) the composition is skewed to polar residues. Over residues 627-638 (SSSSSIQYKSPS) the composition is skewed to low complexity. Residues 656–673 (STITNQKLGSAVASNSGI) are compositionally biased toward polar residues. Low complexity predominate over residues 674-689 (SSTPNNSNNYNNNTDS). The span at 693-726 (RGSSGSNTANSTQMGITNPGNVTKLSTHKASSPS) shows a compositional bias: polar residues. Serine 735 carries the phosphoserine modification. Residues 743-756 (SPTQNIGHNSTHTN) show a composition bias toward polar residues. A compositionally biased stretch (low complexity) spans 787 to 807 (STLNTISGNSSNNLTSSNYFS). The segment covering 808-821 (NEKEGSRVNGDFKR) has biased composition (basic and acidic residues). The segment covering 901–913 (SQSISNRKNSSAS) has biased composition (polar residues). Positions 918–956 (NILGSSVSGNVSGIGNNNVGSNNNSGPNNSVPLSANTGN) are enriched in low complexity.

This sequence belongs to the protein kinase superfamily. Ser/Thr protein kinase family. As to quaternary structure, interacts with CDC31.

The enzyme catalyses L-seryl-[protein] + ATP = O-phospho-L-seryl-[protein] + ADP + H(+). The catalysed reaction is L-threonyl-[protein] + ATP = O-phospho-L-threonyl-[protein] + ADP + H(+). Functionally, protein kinase involved in morphogenesis and cell integrity. The polypeptide is Serine/threonine-protein kinase KIC1 (KIC1) (Saccharomyces cerevisiae (strain ATCC 204508 / S288c) (Baker's yeast)).